The primary structure comprises 174 residues: NADH-ubiquinone oxidoreductase chain 6 (174 aa).

The next 6 helical transmembrane spans lie at 1 to 21, 24 to 44, 47 to 67, 86 to 106, 111 to 131, and 151 to 171; these read MTYALFLLSVSLVMGFVGFSS, SPIYGGLVLIVSGVVGCAIIL, GGGYMGLMVFLIYLGGMMVVF, VEVLVSVLVGLAMEVGLVLWV, GMVVVVNFNSVGSWMIYEGEG, and WLVVVTGWTLFVGVYIVIEIA.

It belongs to the complex I subunit 6 family. Core subunit of respiratory chain NADH dehydrogenase (Complex I) which is composed of 45 different subunits.

Its subcellular location is the mitochondrion inner membrane. The enzyme catalyses a ubiquinone + NADH + 5 H(+)(in) = a ubiquinol + NAD(+) + 4 H(+)(out). Core subunit of the mitochondrial membrane respiratory chain NADH dehydrogenase (Complex I) which catalyzes electron transfer from NADH through the respiratory chain, using ubiquinone as an electron acceptor. Essential for the catalytic activity and assembly of complex I. The chain is NADH-ubiquinone oxidoreductase chain 6 (MT-ND6) from Pan troglodytes (Chimpanzee).